Consider the following 117-residue polypeptide: Minor capsid protein VP2 (117 aa).

This sequence belongs to the lagovirus VP2 protein family. In terms of assembly, homooligomer. The portal-like structure consists in 12 copies of VP2. Interacts with capsid protein VP1.

Its subcellular location is the virion. The protein resides in the host cytoplasm. Minor structural protein that forms a portal-like structure at a unique three-fold axis of symmetry, following binding to the host receptor. The channel formed by VP2 may allow the delivery of the viral genome through the host endosomal membrane. This chain is Minor capsid protein VP2, found in Oryctolagus cuniculus (Rabbit).